The chain runs to 128 residues: uncharacterized protein (128 aa).

Positions 1 to 28 are enriched in basic and acidic residues; it reads MDADDFGKKDLENGNESPKKPIFMKDWK. A disordered region spans residues 1–30; it reads MDADDFGKKDLENGNESPKKPIFMKDWKNS.

The protein resides in the cytoplasm. It localises to the nucleus. This is an uncharacterized protein from Schizosaccharomyces pombe (strain 972 / ATCC 24843) (Fission yeast).